The following is a 954-amino-acid chain: Glycine dehydrogenase (decarboxylating) (954 aa).

Lysine 706 bears the N6-(pyridoxal phosphate)lysine mark.

It belongs to the GcvP family. As to quaternary structure, the glycine cleavage system is composed of four proteins: P, T, L and H. Pyridoxal 5'-phosphate is required as a cofactor.

The enzyme catalyses N(6)-[(R)-lipoyl]-L-lysyl-[glycine-cleavage complex H protein] + glycine + H(+) = N(6)-[(R)-S(8)-aminomethyldihydrolipoyl]-L-lysyl-[glycine-cleavage complex H protein] + CO2. The glycine cleavage system catalyzes the degradation of glycine. The P protein binds the alpha-amino group of glycine through its pyridoxal phosphate cofactor; CO(2) is released and the remaining methylamine moiety is then transferred to the lipoamide cofactor of the H protein. The sequence is that of Glycine dehydrogenase (decarboxylating) from Pseudomonas syringae pv. syringae (strain B728a).